Reading from the N-terminus, the 465-residue chain is RuvB-like helicase 2 (465 aa).

Position 72–79 (72–79) interacts with ATP; the sequence is GPPSTGKT.

It belongs to the RuvB family. As to quaternary structure, may form heterododecamers with RVB1. Component of the SWR1 chromatin remodeling complex, the INO80 chromatin remodeling complex, and of the R2TP complex. Interacts with dil1.

Its subcellular location is the nucleus. The enzyme catalyses ATP + H2O = ADP + phosphate + H(+). DNA helicase which participates in several chromatin remodeling complexes, including the SWR1 and the INO80 complexes. The SWR1 complex mediates the ATP-dependent exchange of histone H2A for the H2A variant HZT1 leading to transcriptional regulation of selected genes by chromatin remodeling. The INO80 complex remodels chromatin by shifting nucleosomes and is involved in DNA repair. Also involved in pre-rRNA processing. The protein is RuvB-like helicase 2 (rvb2) of Schizosaccharomyces pombe (strain 972 / ATCC 24843) (Fission yeast).